Reading from the N-terminus, the 241-residue chain is 3-oxoacyl-[acyl-carrier-protein] reductase FabG (241 aa).

NADP(+) contacts are provided by residues 13–16 (GASG), Ser-38, 57–58 (EV), and Asn-83. Substrate is bound at residue Ser-135. Tyr-148 (proton acceptor) is an active-site residue. NADP(+) is bound by residues 148–152 (YCASK) and Ile-181.

Belongs to the short-chain dehydrogenases/reductases (SDR) family. As to quaternary structure, homotetramer.

It catalyses the reaction a (3R)-hydroxyacyl-[ACP] + NADP(+) = a 3-oxoacyl-[ACP] + NADPH + H(+). The protein operates within lipid metabolism; fatty acid biosynthesis. Catalyzes the NADPH-dependent reduction of beta-ketoacyl-ACP substrates to beta-hydroxyacyl-ACP products, the first reductive step in the elongation cycle of fatty acid biosynthesis. This is 3-oxoacyl-[acyl-carrier-protein] reductase FabG (fabG) from Rickettsia conorii (strain ATCC VR-613 / Malish 7).